The following is a 168-amino-acid chain: Putative gustatory receptor clone PTE03 (168 aa).

Residues 1–25 (TTVPKMLINLQKQNKAISYAGCITQ) lie on the Extracellular side of the membrane. Cysteines 22 and 104 form a disulfide. A helical transmembrane segment spans residues 26 to 45 (LSFVLLFAGMENFLLAAMAY). The Cytoplasmic segment spans residues 46 to 67 (DRYVAICKPLRYTAIMKAHLCL). Residues 68–88 (VMTLLSLCISIVDALLHGLMI) form a helical membrane-spanning segment. At 89-121 (LRLSFCTFLEIPHYFCELYQVIKLSCSDTLINN) the chain is on the extracellular side. The helical transmembrane segment at 122 to 143 (ILVYTMTSTLGGVPLGGIIFSY) threads the bilayer. The Cytoplasmic segment spans residues 144–165 (FKIISSILRMPSSGSRHRAFST). The chain crosses the membrane as a helical span at residues 166–168 (CGS).

Belongs to the G-protein coupled receptor 1 family. In terms of tissue distribution, tongue specific.

It localises to the cell membrane. In terms of biological role, possible taste receptor. The protein is Putative gustatory receptor clone PTE03 (Olr1145) of Rattus norvegicus (Rat).